The following is a 292-amino-acid chain: Protease HtpX homolog (292 aa).

2 consecutive transmembrane segments (helical) span residues 4-24 (IALFLLTNVAVVVVLGIVASL) and 38-58 (LGALLGFAFIMGFGGAIISLL). H144 lines the Zn(2+) pocket. Residue E145 is part of the active site. H148 lines the Zn(2+) pocket. A run of 2 helical transmembrane segments spans residues 152-172 (GDMVTMALIQGVMNTFVVFLS) and 199-219 (ITTIVLDIVLGFLAAIIVAWF). Residue E224 coordinates Zn(2+).

Belongs to the peptidase M48B family. Zn(2+) serves as cofactor.

The protein resides in the cell inner membrane. The sequence is that of Protease HtpX homolog from Acidovorax ebreus (strain TPSY) (Diaphorobacter sp. (strain TPSY)).